Consider the following 272-residue polypeptide: MVFYKYSGSGNDFLITQSFKKKDFSNLAKQVCHRHEGFGADGLVIVLPSKDYDYEWDFYNSDGSKAGMCGNASRCVGLFAYQHAIAPKEHVFLAGKREISICIEEPNIIESNLGNYKILDTIPNLRCKKFFTNNSVLENILTFYLIDTGVPHLVGFVKNKEWLNSLNTLELRALRHAFNANINIAFIENEETIFLQTYERGVEDFTLACGTGMAAVFIAARLFYNAPKKATLIPKSNESLELSLKNDGIFYKGIVRYIGMSVLGSVFENGCF.

Residues asparagine 11 and asparagine 60 each contribute to the substrate site. Cysteine 69 acts as the Proton donor in catalysis. Substrate-binding positions include 70 to 71 (GN), asparagine 181, and 199 to 200 (ER). The active-site Proton acceptor is the cysteine 209. Position 210-211 (210-211 (GT)) interacts with substrate.

The protein belongs to the diaminopimelate epimerase family. As to quaternary structure, homodimer.

It is found in the cytoplasm. It carries out the reaction (2S,6S)-2,6-diaminopimelate = meso-2,6-diaminopimelate. It participates in amino-acid biosynthesis; L-lysine biosynthesis via DAP pathway; DL-2,6-diaminopimelate from LL-2,6-diaminopimelate: step 1/1. Its function is as follows. Catalyzes the stereoinversion of LL-2,6-diaminopimelate (L,L-DAP) to meso-diaminopimelate (meso-DAP), a precursor of L-lysine and an essential component of the bacterial peptidoglycan. The protein is Diaminopimelate epimerase of Helicobacter pylori (strain P12).